A 1976-amino-acid polypeptide reads, in one-letter code: Protein TIC 214 (1976 aa).

The next 6 helical transmembrane spans lie at 11–31, 64–84, 87–107, 126–146, 173–193, and 221–241; these read LLLLWINIVNSVVMVGLYYGF, FIMGQFIVFISTYYPPLHLAL, PHTLTVLVIPYLLSHFWFFWN, LSIQYVFLNNLIFQLFNHFVL, FFGWLIGHMLLMKCIGLVLSW, and IFSILLFIICICYLGRMPSPI. Residues 619 to 635 show a composition bias toward acidic residues; that stretch reads FEEEEEEEEEDDQEEST. Disordered stretches follow at residues 619–642 and 830–861; these read FEEEEEEEEEDDQEESTDDHGIRS and SSYVGEGAKEKEKIEEEHEEEKGEYKRKEDKR. The span at 836–861 shows a compositional bias: basic and acidic residues; the sequence is GAKEKEKIEEEHEEEKGEYKRKEDKR. 2 helical membrane-spanning segments follow: residues 1054–1074 and 1202–1222; these read IIKIVLFIKIKVKEVFFFFVL and IYMSILLCITNIYRIYVQFFL. Over residues 1633–1665 the composition is skewed to basic and acidic residues; sequence QKERFHPKPKVESNQKGYLELENRNRDEKERQH. Residues 1633 to 1669 are disordered; the sequence is QKERFHPKPKVESNQKGYLELENRNRDEKERQHQGNL.

The protein belongs to the TIC214 family. Part of the Tic complex.

The protein localises to the plastid. It localises to the chloroplast inner membrane. Involved in protein precursor import into chloroplasts. May be part of an intermediate translocation complex acting as a protein-conducting channel at the inner envelope. The polypeptide is Protein TIC 214 (Nymphaea alba (White water-lily)).